Reading from the N-terminus, the 45-residue chain is Photosystem II reaction center protein K (45 aa).

A propeptide spanning residues 1–8 is cleaved from the precursor; sequence MEAALLLA. Residues 24-44 form a helical membrane-spanning segment; sequence LPIIPVFFLLLAFVWQAAVGF.

The protein belongs to the PsbK family. PSII is composed of 1 copy each of membrane proteins PsbA, PsbB, PsbC, PsbD, PsbE, PsbF, PsbH, PsbI, PsbJ, PsbK, PsbL, PsbM, PsbT, PsbX, PsbY, PsbZ, Psb30/Ycf12, peripheral proteins PsbO, CyanoQ (PsbQ), PsbU, PsbV and a large number of cofactors. It forms dimeric complexes.

The protein resides in the cellular thylakoid membrane. Its function is as follows. One of the components of the core complex of photosystem II (PSII). PSII is a light-driven water:plastoquinone oxidoreductase that uses light energy to abstract electrons from H(2)O, generating O(2) and a proton gradient subsequently used for ATP formation. It consists of a core antenna complex that captures photons, and an electron transfer chain that converts photonic excitation into a charge separation. This chain is Photosystem II reaction center protein K, found in Nostoc sp. (strain PCC 7120 / SAG 25.82 / UTEX 2576).